Consider the following 991-residue polypeptide: Adhesion G-protein coupled receptor F3 (991 aa).

The first 20 residues, 1 to 20 (MSSLALSQLLLAVTLPLLEL), serve as a signal peptide directing secretion. The Extracellular segment spans residues 21–694 (EPTFVPTAQS…ENPTLDLLSQ (674 aa)). N-linked (GlcNAc...) asparagine glycosylation is found at Asn-75, Asn-102, Asn-118, Asn-321, Asn-362, Asn-484, Asn-571, Asn-589, Asn-630, and Asn-660. The GAIN-B domain occupies 519–684 (HPFSFSSANV…SILMSQHTVP (166 aa)). Disulfide bonds link Cys-635/Cys-666 and Cys-654/Cys-668. The segment at 635-684 (CVFWDHRVFQGQGGWSDEGCEVHAANASITQCICQHLTAFSILMSQHTVP) is GPS. Residues 695 to 715 (VGTGASVLALLVCLAIYGLVW) traverse the membrane as a helical segment. Topologically, residues 716–730 (RVVVRNKVAFFRHTT) are cytoplasmic. Residues 731–751 (LFNMVICLLVADTCFLGSPFL) traverse the membrane as a helical segment. Over 752–757 (PSGYHS) the chain is Extracellular. The chain crosses the membrane as a helical span at residues 758–778 (LICLVTAFLCHFFYLATFFWM). Over 779 to 799 (LAQALVLAHQLLFVFHQLSKH) the chain is Cytoplasmic. A helical transmembrane segment spans residues 800-820 (VVLSLMVMLGYLCPLGFAGVT). The Extracellular portion of the chain corresponds to 821 to 850 (LGLYLPQRKYLWEGKCFLNGGGVMLYSFSE). Residues 851 to 871 (PVLAIVGVNGLVLVIAVLKLL) traverse the membrane as a helical segment. Over 872–892 (RPSLSEGPTVEKRQALVGVLK) the chain is Cytoplasmic. A helical membrane pass occupies residues 893–913 (ALLILTPIFGLTWGLGVATLF). Residues 914 to 916 (DGS) lie on the Extracellular side of the membrane. The chain crosses the membrane as a helical span at residues 917–937 (IVSHYAFSILNSLQGVFILVF). Topologically, residues 938 to 991 (GCLTDKKVLEALRKRLRGSRSSNSAISMVTNETYTSEHSKERSEPASYEERMTD) are cytoplasmic. The segment at 964-991 (SMVTNETYTSEHSKERSEPASYEERMTD) is disordered. Over residues 972-991 (TSEHSKERSEPASYEERMTD) the composition is skewed to basic and acidic residues.

The protein belongs to the G-protein coupled receptor 2 family. Adhesion G-protein coupled receptor (ADGR) subfamily. In terms of assembly, heterodimer of 2 chains generated by proteolytic processing; the large extracellular N-terminal fragment and the membrane-bound C-terminal fragment predominantly remain associated and non-covalently linked. In terms of processing, autoproteolytically processed at the GPS region of the GAIN-B domain; this cleavage modulates receptor activity. Expression is restricted to testis and circumvallate papillae.

It is found in the membrane. In terms of biological role, orphan receptor. The polypeptide is Adhesion G-protein coupled receptor F3 (ADGRF3) (Mus musculus (Mouse)).